Here is a 158-residue protein sequence, read N- to C-terminus: Trafficking protein particle complex subunit 6B (158 aa).

This sequence belongs to the TRAPP small subunits family. BET3 subfamily. Homodimer. Part of a TRAPP complex. Heterodimer with TRAPPC3. The heterodimer TRAPPC6B-TRAPPC3 interacts with TRAPPC1 likely providing a core for TRAPP complex formation.

The protein resides in the golgi apparatus. Its subcellular location is the cis-Golgi network. It localises to the endoplasmic reticulum. Functionally, component of a transport protein particle (TRAPP) complex that may function in specific stages of inter-organelle traffic. Specifically involved in the early development of neural circuitry, likely by controlling the frequency and amplitude of intracellular calcium transients implicated in the regulation of neuron differentiation and survival. The protein is Trafficking protein particle complex subunit 6B of Bos taurus (Bovine).